Here is a 372-residue protein sequence, read N- to C-terminus: N-methyl-L-tryptophan oxidase (372 aa).

Residue 4–34 participates in FAD binding; it reads DLIIIGSGSVGAAAGYYATRAGLNVLMTDAH. Cys-308 carries the post-translational modification S-8alpha-FAD cysteine.

This sequence belongs to the MSOX/MTOX family. MTOX subfamily. As to quaternary structure, monomer. The cofactor is FAD.

The enzyme catalyses N(alpha)-methyl-L-tryptophan + O2 + H2O = L-tryptophan + formaldehyde + H2O2. Its function is as follows. Catalyzes the oxidative demethylation of N-methyl-L-tryptophan. The sequence is that of N-methyl-L-tryptophan oxidase from Shigella boydii serotype 18 (strain CDC 3083-94 / BS512).